The sequence spans 61 residues: Small ribosomal subunit protein uS14 (61 aa).

Residues Cys-24, Cys-27, Cys-40, and Cys-43 each coordinate Zn(2+).

This sequence belongs to the universal ribosomal protein uS14 family. Zinc-binding uS14 subfamily. Part of the 30S ribosomal subunit. Contacts proteins S3 and S10. Requires Zn(2+) as cofactor.

Its function is as follows. Binds 16S rRNA, required for the assembly of 30S particles and may also be responsible for determining the conformation of the 16S rRNA at the A site. This Campylobacter concisus (strain 13826) protein is Small ribosomal subunit protein uS14.